A 234-amino-acid polypeptide reads, in one-letter code: dTDP-4-amino-4,6-dideoxyglucose formyltransferase (234 aa).

DTDP-4-amino-4,6-dideoxy-alpha-D-glucose is bound by residues Asn-9 and 62–64 (HCK). 65 to 67 (QRF) lines the (6R)-10-formyltetrahydrofolate pocket. The active-site Proton acceptor is His-81. 90–94 (GWFPQ) is a dTDP-4-amino-4,6-dideoxy-alpha-D-glucose binding site. Asp-112, Asp-116, and Lys-175 together coordinate (6R)-10-formyltetrahydrofolate. DTDP-4-amino-4,6-dideoxy-alpha-D-glucose is bound at residue Asn-209.

It belongs to the dTDP-Qui4N formyltransferase family. In terms of assembly, homodimer.

It carries out the reaction dTDP-4-amino-4,6-dideoxy-alpha-D-glucose + (6R)-10-formyltetrahydrofolate = dTDP-4-formamido-4,6-dideoxy-alpha-D-glucose + (6S)-5,6,7,8-tetrahydrofolate + H(+). Sugar N-formyltransferase that catalyzes the conversion of dTDP-4-amino-4,6-dideoxyglucose into dTDP-4-formamido-4,6-dideoxyglucose using N(10)-formyltetrahydrofolate as the carbon source. Plays a role in virulence. This Mycobacterium bovis (strain ATCC BAA-935 / AF2122/97) protein is dTDP-4-amino-4,6-dideoxyglucose formyltransferase.